A 216-amino-acid chain; its full sequence is MKIIEFRKKIPYLRYLEMQEKLRKFRKECILFLEHAPTITGGINYNPENLLVKPEFLESMGIQIHWTQRGGDFTAHEPGQLVLYSHVDLKKRNLSIRFYLENLLRSVIDSVRSTWDLQLISDSDSPGLYLESNPSQKICSIGVNFKSFFTSHGIAFNLSNDLKTFRCINPCGRNWTNMTSVKDLGFDFGLHKRDELISCLKKNLCSFLEPINVSSS.

In terms of domain architecture, BPL/LPL catalytic spans 24 to 212; the sequence is KFRKECILFL…NLCSFLEPIN (189 aa). Substrate-binding positions include 69 to 76, 140 to 142, and 153 to 155; these read RGGDFTAH, SIG, and GIA. Cys-171 acts as the Acyl-thioester intermediate in catalysis.

The protein belongs to the LipB family.

The protein resides in the cytoplasm. The enzyme catalyses octanoyl-[ACP] + L-lysyl-[protein] = N(6)-octanoyl-L-lysyl-[protein] + holo-[ACP] + H(+). The protein operates within protein modification; protein lipoylation via endogenous pathway; protein N(6)-(lipoyl)lysine from octanoyl-[acyl-carrier-protein]: step 1/2. Catalyzes the transfer of endogenously produced octanoic acid from octanoyl-acyl-carrier-protein onto the lipoyl domains of lipoate-dependent enzymes. Lipoyl-ACP can also act as a substrate although octanoyl-ACP is likely to be the physiological substrate. The polypeptide is Octanoyltransferase (Leptospira interrogans serogroup Icterohaemorrhagiae serovar Lai (strain 56601)).